Here is a 971-residue protein sequence, read N- to C-terminus: DNA-directed RNA polymerase subunit Rpo1N (971 aa).

Position 1 is a blocked amino end (Met) (Met-1). Positions 62, 65, 72, 75, 102, 105, 149, and 152 each coordinate Zn(2+). Positions Ser-185–Glu-204 are disordered. Mg(2+) contacts are provided by Asp-527, Asp-529, and Asp-531. Positions Val-951–Asp-971 are disordered.

The protein belongs to the RNA polymerase beta' chain family. Part of the RNA polymerase complex. Mg(2+) is required as a cofactor. It depends on Zn(2+) as a cofactor. Post-translationally, the N-terminus is blocked.

It localises to the cytoplasm. The catalysed reaction is RNA(n) + a ribonucleoside 5'-triphosphate = RNA(n+1) + diphosphate. Its function is as follows. DNA-dependent RNA polymerase (RNAP) catalyzes the transcription of DNA into RNA using the four ribonucleoside triphosphates as substrates. Forms the clamp head domain. The chain is DNA-directed RNA polymerase subunit Rpo1N from Halobacterium salinarum (strain ATCC 29341 / DSM 671 / R1).